The sequence spans 390 residues: Zinc transporter 7 (390 aa).

Over 1–37 (MLPLSIKDDEYKPPKFNLVRKVSGWIRSIFSDTTSRN) the chain is Cytoplasmic. The helical transmembrane segment at 38 to 58 (LFCFLCLNLSFAFVELFYGIW) threads the bilayer. Topologically, residues 59-67 (SNSLGLISD) are lumenal. A helical transmembrane segment spans residues 68-88 (SFHMFFDCTALLAGLAASVIS). Residues 89 to 102 (RWKTNEAFSYGYVR) are Cytoplasmic-facing. A helical membrane pass occupies residues 103–123 (AEVLAGFVNGLFLIFTAFFIF). Residues 124–140 (SEGIERALDTPEVHHER) are Lumenal-facing. The helical transmembrane segment at 141–161 (LLPVSILGFLVNLIGIFVFQH) threads the bilayer. The his-rich loop stretch occupies residues 161-226 (HGGGHGHSHE…SHDQSHKHGH (66 aa)). Residues 162–250 (GGGHGHSHES…TGSSKQILEG (89 aa)) lie on the Cytoplasmic side of the membrane. The disordered stretch occupies residues 167 to 243 (HSHESGHGHS…DEPPEEHTGS (77 aa)). Over residues 177–186 (HSLFNGSLSH) the composition is skewed to low complexity. A compositionally biased stretch (basic residues) spans 187–208 (GHSHSHGGSHGHSHGGGHGHSH). Basic and acidic residues-rich tracts occupy residues 209–222 (SHGE…DQSH) and 232–242 (CHDEPPEEHTG). The chain crosses the membrane as a helical span at residues 251–271 (VFLHIVADALGSVGVIISTIL). Residues 272 to 276 (MQRYG) are Lumenal-facing. A helical transmembrane segment spans residues 277–297 (LMIADPICSMLIALLIFVSVI). The Cytoplasmic portion of the chain corresponds to 298-390 (PLLKQSIGIL…LYVQIDMAAM (93 aa)).

It belongs to the cation diffusion facilitator (CDF) transporter (TC 2.A.4) family. SLC30A subfamily. In terms of assembly, homooligomer.

Its subcellular location is the golgi apparatus membrane. The protein localises to the cytoplasmic vesicle. It localises to the golgi apparatus. It is found in the trans-Golgi network. The protein resides in the sarcoplasmic reticulum. Its subcellular location is the mitochondrion. The catalysed reaction is Zn(2+)(in) = Zn(2+)(out). In terms of biological role, zinc ion transporter mediating zinc entry from the cytosol into the lumen of organelles along the secretory pathway. By contributing to zinc ion homeostasis within the early secretory pathway, regulates the activation and folding of enzymes like alkaline phosphatases. This is Zinc transporter 7 (slc30a7) from Xenopus tropicalis (Western clawed frog).